Consider the following 138-residue polypeptide: uncharacterized protein (138 aa).

3 helical membrane-spanning segments follow: residues 8 to 28 (LIIQ…AFLP), 47 to 67 (FIIC…TIIV), and 82 to 102 (TLPV…IAFI).

It to U.parvum UU007, UU008 and UU041.

The protein resides in the cell membrane. This is an uncharacterized protein from Ureaplasma parvum serovar 3 (strain ATCC 700970).